We begin with the raw amino-acid sequence, 345 residues long: Phosphate acyltransferase (345 aa).

This sequence belongs to the PlsX family. Homodimer. Probably interacts with PlsY.

Its subcellular location is the cytoplasm. The enzyme catalyses a fatty acyl-[ACP] + phosphate = an acyl phosphate + holo-[ACP]. It participates in lipid metabolism; phospholipid metabolism. Functionally, catalyzes the reversible formation of acyl-phosphate (acyl-PO(4)) from acyl-[acyl-carrier-protein] (acyl-ACP). This enzyme utilizes acyl-ACP as fatty acyl donor, but not acyl-CoA. The polypeptide is Phosphate acyltransferase (Wolbachia sp. subsp. Brugia malayi (strain TRS)).